Here is a 203-residue protein sequence, read N- to C-terminus: bMERB domain-containing protein 1 (203 aa).

The 147-residue stretch at 3–149 (LKQSLSVHLE…EQEEDKEMAD (147 aa)) folds into the bMERB domain. A disordered region spans residues 160–186 (KVTKSSASSRAEKKAEPPPSKPTVAKT).

This Rattus norvegicus (Rat) protein is bMERB domain-containing protein 1 (Bmerb1).